Here is a 252-residue protein sequence, read N- to C-terminus: Bridging integrator 3 homolog (252 aa).

In terms of domain architecture, BAR spans 8 to 231 (GGPKKQIVPK…VDEVQLSDAE (224 aa)). 3 coiled-coil regions span residues 17 to 57 (KTVE…MSKS), 119 to 150 (SLNM…KDKT), and 224 to 244 (EVQL…AELR).

It localises to the cytoplasm. The protein resides in the cytoskeleton. Involved in cytokinesis and septation where it has a role in the localization of F-actin. The polypeptide is Bridging integrator 3 homolog (bin3) (Xenopus laevis (African clawed frog)).